A 401-amino-acid chain; its full sequence is Nicotinate phosphoribosyltransferase (401 aa).

At H221 the chain carries Phosphohistidine; by autocatalysis.

It belongs to the NAPRTase family. In terms of processing, transiently phosphorylated on a His residue during the reaction cycle. Phosphorylation strongly increases the affinity for substrates and increases the rate of nicotinate D-ribonucleotide production. Dephosphorylation regenerates the low-affinity form of the enzyme, leading to product release.

The enzyme catalyses nicotinate + 5-phospho-alpha-D-ribose 1-diphosphate + ATP + H2O = nicotinate beta-D-ribonucleotide + ADP + phosphate + diphosphate. It functions in the pathway cofactor biosynthesis; NAD(+) biosynthesis; nicotinate D-ribonucleotide from nicotinate: step 1/1. Its function is as follows. Catalyzes the synthesis of beta-nicotinate D-ribonucleotide from nicotinate and 5-phospho-D-ribose 1-phosphate at the expense of ATP. This chain is Nicotinate phosphoribosyltransferase, found in Serratia proteamaculans (strain 568).